The following is a 172-amino-acid chain: MALDLRNYIASIENYPEEGIVFRDISPLMADGEAYRQATDRIVQFAKDKGVEMIVGPEARGFIVGCPVAYELGVGFAPARKKGKLPRETVKADYSLEYGTASLYMHKDAVKPGQKVLVTDDLLATGGTIGATIDLVEQLGGVVVGCAFIIELEDLHGRDKIKGYDTLALMKY.

It belongs to the purine/pyrimidine phosphoribosyltransferase family. In terms of assembly, homodimer.

It is found in the cytoplasm. It catalyses the reaction AMP + diphosphate = 5-phospho-alpha-D-ribose 1-diphosphate + adenine. It functions in the pathway purine metabolism; AMP biosynthesis via salvage pathway; AMP from adenine: step 1/1. Catalyzes a salvage reaction resulting in the formation of AMP, that is energically less costly than de novo synthesis. In Ligilactobacillus salivarius (strain UCC118) (Lactobacillus salivarius), this protein is Adenine phosphoribosyltransferase.